A 226-amino-acid polypeptide reads, in one-letter code: 3-dehydroquinate dehydratase (226 aa).

Residues 30–32 (EWR) and Arg62 contribute to the 3-dehydroquinate site. His118 acts as the Proton donor/acceptor in catalysis. Lys143 serves as the catalytic Schiff-base intermediate with substrate. 3-dehydroquinate-binding residues include Arg186, Ser205, and Gln209.

Belongs to the type-I 3-dehydroquinase family. Homodimer.

It catalyses the reaction 3-dehydroquinate = 3-dehydroshikimate + H2O. The protein operates within metabolic intermediate biosynthesis; chorismate biosynthesis; chorismate from D-erythrose 4-phosphate and phosphoenolpyruvate: step 3/7. In terms of biological role, involved in the third step of the chorismate pathway, which leads to the biosynthesis of aromatic amino acids. Catalyzes the cis-dehydration of 3-dehydroquinate (DHQ) and introduces the first double bond of the aromatic ring to yield 3-dehydroshikimate. This Streptococcus equi subsp. zooepidemicus (strain H70) protein is 3-dehydroquinate dehydratase.